The following is a 64-amino-acid chain: MLNLEVIIETGEQVIQKISFNLQHISSVLNTEVFDPFDYCYYRGGNFWEIESAEDCSGDDEFIE.

The chain is Non-structural protein 3b from Avian infectious bronchitis virus (strain Beaudette) (IBV).